A 131-amino-acid polypeptide reads, in one-letter code: Large ribosomal subunit protein eL14 (131 aa).

It belongs to the eukaryotic ribosomal protein eL14 family. Component of the large ribosomal subunit. Mature ribosomes consist of a small (40S) and a large (60S) subunit. The 40S subunit contains about 32 different proteins and 1 molecule of RNA (18S). The 60S subunit contains 45 different proteins and 3 molecules of RNA (25S, 5.8S and 5S).

Its subcellular location is the cytoplasm. Its function is as follows. Component of the ribosome, a large ribonucleoprotein complex responsible for the synthesis of proteins in the cell. The small ribosomal subunit (SSU) binds messenger RNAs (mRNAs) and translates the encoded message by selecting cognate aminoacyl-transfer RNA (tRNA) molecules. The large subunit (LSU) contains the ribosomal catalytic site termed the peptidyl transferase center (PTC), which catalyzes the formation of peptide bonds, thereby polymerizing the amino acids delivered by tRNAs into a polypeptide chain. The nascent polypeptides leave the ribosome through a tunnel in the LSU and interact with protein factors that function in enzymatic processing, targeting, and the membrane insertion of nascent chains at the exit of the ribosomal tunnel. The protein is Large ribosomal subunit protein eL14 of Candida albicans (strain SC5314 / ATCC MYA-2876) (Yeast).